A 334-amino-acid chain; its full sequence is Putative peptide import ATP-binding protein BAB2_1053 (334 aa).

An ABC transporter domain is found at 22 to 272 (VRTDDLVRDF…PLHPYSRALL (251 aa)). Residue 64 to 71 (GESGSGKS) coordinates ATP.

This sequence belongs to the ABC transporter superfamily. In terms of assembly, the complex is composed of two ATP-binding proteins (BAB2_1052 and BAB2_1053), two transmembrane proteins (BAB2_1050 and BAB2_1051) and a solute-binding protein (BAB2_1049).

The protein localises to the cell inner membrane. In terms of biological role, probably part of an ABC transporter complex that could be involved in peptide import. Probably responsible for energy coupling to the transport system. This chain is Putative peptide import ATP-binding protein BAB2_1053, found in Brucella abortus (strain 2308).